We begin with the raw amino-acid sequence, 929 residues long: Isoleucine--tRNA ligase (929 aa).

The 'HIGH' region signature appears at 58–68; it reads PYANGDIHIGH. Glu563 contributes to the L-isoleucyl-5'-AMP binding site. The short motif at 605-609 is the 'KMSKS' region element; it reads KMSKS. Lys608 contacts ATP. Zn(2+)-binding residues include Cys892, Cys895, Cys912, and Cys915.

The protein belongs to the class-I aminoacyl-tRNA synthetase family. IleS type 1 subfamily. In terms of assembly, monomer. Requires Zn(2+) as cofactor.

The protein localises to the cytoplasm. It carries out the reaction tRNA(Ile) + L-isoleucine + ATP = L-isoleucyl-tRNA(Ile) + AMP + diphosphate. Functionally, catalyzes the attachment of isoleucine to tRNA(Ile). As IleRS can inadvertently accommodate and process structurally similar amino acids such as valine, to avoid such errors it has two additional distinct tRNA(Ile)-dependent editing activities. One activity is designated as 'pretransfer' editing and involves the hydrolysis of activated Val-AMP. The other activity is designated 'posttransfer' editing and involves deacylation of mischarged Val-tRNA(Ile). In Neisseria gonorrhoeae (strain NCCP11945), this protein is Isoleucine--tRNA ligase.